The chain runs to 126 residues: Holo-[acyl-carrier-protein] synthase (126 aa).

The Mg(2+) site is built by D8 and E57.

The protein belongs to the P-Pant transferase superfamily. AcpS family. Mg(2+) serves as cofactor.

It localises to the cytoplasm. The enzyme catalyses apo-[ACP] + CoA = holo-[ACP] + adenosine 3',5'-bisphosphate + H(+). In terms of biological role, transfers the 4'-phosphopantetheine moiety from coenzyme A to a Ser of acyl-carrier-protein. The polypeptide is Holo-[acyl-carrier-protein] synthase (Trichlorobacter lovleyi (strain ATCC BAA-1151 / DSM 17278 / SZ) (Geobacter lovleyi)).